The primary structure comprises 90 residues: Bombyxin D-1 (90 aa).

The N-terminal stretch at 1–18 (MKLLGFFLSWVSVCAIVS) is a signal peptide. Intrachain disulfides connect Cys27-Cys77, Cys39-Cys90, and Cys76-Cys81. Positions 48–68 (SVAHYAGYGWPLLPSLSEERG) are cleaved as a propeptide — c peptide like.

This sequence belongs to the insulin family. As to quaternary structure, heterodimer of a B chain and an A chain linked by two disulfide bonds.

It localises to the secreted. In terms of biological role, brain peptide responsible for activation of prothoracic glands to produce ecdysone in insects. This chain is Bombyxin D-1 (BBXD1), found in Bombyx mori (Silk moth).